The chain runs to 266 residues: RNA-binding protein 7 (266 aa).

Position 2 is an N-acetylglycine (Gly-2). The 78-residue stretch at 10–87 (RTLFVGNLET…RPIKIQFRSG (78 aa)) folds into the RRM domain. ZCCHC8 binding regions lie at residues 25-35 (LLFELFHQAGP) and 59-76 (HEVSVPYAMNLLNGIKLY). Over residues 90-115 (HAPQDVSLSYPQHHVGNSSPTSTSPS) the composition is skewed to polar residues. A disordered region spans residues 90-118 (HAPQDVSLSYPQHHVGNSSPTSTSPSRYE). A phosphoserine mark is found at Ser-136 and Ser-137. Arg-152 bears the Omega-N-methylarginine mark. The tract at residues 162-266 (SSPLDQSGFS…RDGKWRSSRH (105 aa)) is disordered. The span at 173 to 188 (SVQSHSHSFNQSSSSQ) shows a compositional bias: low complexity. Ser-204 is subject to Phosphoserine. The segment covering 209 to 266 (ADRHYSREQRYTDHGSDHHYRGKRDDFFYEDRNHDDWSHDYDNRRDSSRDGKWRSSRH) has biased composition (basic and acidic residues).

In terms of assembly, component of the nuclear exosome targeting (NEXT) complex composed of MTREX, ZCCHC8, and RBM7 that directs a subset of non-coding short-lived RNAs for exosomal degradation. Interacts with ZCCHC8 and SF3B2/SAP145. Binds to MTREX through ZCCHC8. Interacts with YWHAE and YWHAZ; these interactions are stress-dependent and RBM7 phosphorylation dependent; release RNA from the NEXT complex and may affect RNA targeting to the nuclear RNA exosomome for degradation. Interacts with MEPCE and LARP7, the core subunits of 7SK snRNP; upon genotoxic stress this interaction is enhanced, triggering the release of inactive P-TEFb complex from the core and P-TEFb complex activation. Post-translationally, phosphorylated at Ser-136 by MAPK14/p38-alpha-activated MAPKAPK2/MK2; this phosphorylation is stress-dependent; this phosphorylation decreases its RNA-binding capacity therefore affecting RNA nuclear exosome-mediated degradation. This phosphorylation mediates YWHAE and YWHAZ interactions. In terms of tissue distribution, ubiquitous.

Its subcellular location is the nucleus. The protein localises to the nucleoplasm. Its function is as follows. RNA-binding subunit of the trimeric nuclear exosome targeting (NEXT) complex, a complex that functions as an RNA exosome cofactor that directs a subset of non-coding short-lived RNAs for exosomal degradation. NEXT is involved in surveillance and turnover of aberrant transcripts and non-coding RNAs. Binds preferentially polyuridine sequences and associates with newly synthesized RNAs, including pre-mRNAs and short-lived exosome substrates such as promoter upstream transcripts (PROMPTs), enhancer RNAs (eRNAs), and 3'-extended products from small nuclear RNAs (snRNAs). Participates in several biological processes including DNA damage response (DDR) and stress response. During stress response, activation of the p38MAPK-MK2 pathway decreases RBM7-RNA-binding and subsequently the RNA exosome degradation activities, thereby modulating the turnover of non-coding transcriptome. Participates in DNA damage response (DDR), through its interaction with MEPCE and LARP7, the core subunits of 7SK snRNP complex, that release the positive transcription elongation factor b (P-TEFb) complex from the 7SK snRNP. In turn, activation of P-TEFb complex induces the transcription of P-TEFb-dependent DDR genes to promote cell viability. The protein is RNA-binding protein 7 of Homo sapiens (Human).